The primary structure comprises 274 residues: tRNA-cytidine(32) 2-sulfurtransferase (274 aa).

The PP-loop motif motif lies at Ser-40–Ser-45. Cys-115, Cys-118, and Cys-206 together coordinate [4Fe-4S] cluster.

It belongs to the TtcA family. In terms of assembly, homodimer. Mg(2+) is required as a cofactor. Requires [4Fe-4S] cluster as cofactor.

The protein localises to the cytoplasm. The enzyme catalyses cytidine(32) in tRNA + S-sulfanyl-L-cysteinyl-[cysteine desulfurase] + AH2 + ATP = 2-thiocytidine(32) in tRNA + L-cysteinyl-[cysteine desulfurase] + A + AMP + diphosphate + H(+). It participates in tRNA modification. Functionally, catalyzes the ATP-dependent 2-thiolation of cytidine in position 32 of tRNA, to form 2-thiocytidine (s(2)C32). The sulfur atoms are provided by the cysteine/cysteine desulfurase (IscS) system. The chain is tRNA-cytidine(32) 2-sulfurtransferase from Azotobacter vinelandii (strain DJ / ATCC BAA-1303).